A 238-amino-acid polypeptide reads, in one-letter code: Histone H1 (238 aa).

2 stretches are compositionally biased toward low complexity: residues 21 to 34 (AAVDTPAAKPAKAP) and 123 to 132 (AKAPAAVKPK). Disordered regions lie at residues 21-57 (AAVDTPAAKPAKAPKAAKAKKSTPGPKKPRVTPAHPS) and 123-238 (AKAP…KAKK). Residues 54-124 (AHPSYAEMVS…KVKGSYKLAK (71 aa)) enclose the H15 domain. Positions 133 to 197 (TATKKKPAAK…AAKPKAKAAA (65 aa)) are enriched in basic residues. 2 stretches are compositionally biased toward low complexity: residues 198–208 (KKAPAAATPKK) and 217–230 (KRATPVKKAAPAKK).

Belongs to the histone H1/H5 family.

It is found in the nucleus. The protein resides in the chromosome. In terms of biological role, histones H1 are necessary for the condensation of nucleosome chains into higher-order structures. This Triticum aestivum (Wheat) protein is Histone H1.